The following is a 157-amino-acid chain: Transcription elongation factor GreA (157 aa).

A coiled-coil region spans residues Ala-46–Glu-73.

The protein belongs to the GreA/GreB family.

In terms of biological role, necessary for efficient RNA polymerase transcription elongation past template-encoded arresting sites. The arresting sites in DNA have the property of trapping a certain fraction of elongating RNA polymerases that pass through, resulting in locked ternary complexes. Cleavage of the nascent transcript by cleavage factors such as GreA or GreB allows the resumption of elongation from the new 3'terminus. GreA releases sequences of 2 to 3 nucleotides. This Acidiphilium cryptum (strain JF-5) protein is Transcription elongation factor GreA.